The sequence spans 132 residues: Holo-[acyl-carrier-protein] synthase (132 aa).

2 residues coordinate Mg(2+): Asp-8 and Glu-57.

This sequence belongs to the P-Pant transferase superfamily. AcpS family. It depends on Mg(2+) as a cofactor.

The protein resides in the cytoplasm. The enzyme catalyses apo-[ACP] + CoA = holo-[ACP] + adenosine 3',5'-bisphosphate + H(+). In terms of biological role, transfers the 4'-phosphopantetheine moiety from coenzyme A to a Ser of acyl-carrier-protein. The protein is Holo-[acyl-carrier-protein] synthase of Methylobacterium nodulans (strain LMG 21967 / CNCM I-2342 / ORS 2060).